The sequence spans 739 residues: Elongation factor 2 (739 aa).

A tr-type G domain is found at 19-261 (RNIRNIGIIA…MVALHVPDPI (243 aa)). Residues 28-35 (AHVDHGKT), 94-98 (DTPGH), and 148-151 (NKID) each bind GTP. His-603 carries the post-translational modification Diphthamide.

The protein belongs to the TRAFAC class translation factor GTPase superfamily. Classic translation factor GTPase family. EF-G/EF-2 subfamily.

The protein resides in the cytoplasm. In terms of biological role, catalyzes the GTP-dependent ribosomal translocation step during translation elongation. During this step, the ribosome changes from the pre-translocational (PRE) to the post-translocational (POST) state as the newly formed A-site-bound peptidyl-tRNA and P-site-bound deacylated tRNA move to the P and E sites, respectively. Catalyzes the coordinated movement of the two tRNA molecules, the mRNA and conformational changes in the ribosome. In Korarchaeum cryptofilum (strain OPF8), this protein is Elongation factor 2.